The sequence spans 341 residues: L-threonine 3-dehydrogenase (341 aa).

Cys38 lines the Zn(2+) pocket. Active-site charge relay system residues include Thr40 and His43. Zn(2+)-binding residues include His63, Glu64, Cys93, Cys96, Cys99, and Cys107. NAD(+) contacts are provided by residues Ile175, Asp195, Arg200, 262 to 264 (LGI), and 286 to 287 (IY).

Belongs to the zinc-containing alcohol dehydrogenase family. In terms of assembly, homotetramer. It depends on Zn(2+) as a cofactor.

The protein resides in the cytoplasm. It catalyses the reaction L-threonine + NAD(+) = (2S)-2-amino-3-oxobutanoate + NADH + H(+). It participates in amino-acid degradation; L-threonine degradation via oxydo-reductase pathway; glycine from L-threonine: step 1/2. Catalyzes the NAD(+)-dependent oxidation of L-threonine to 2-amino-3-ketobutyrate. The protein is L-threonine 3-dehydrogenase of Salmonella gallinarum (strain 287/91 / NCTC 13346).